The following is a 141-amino-acid chain: Small ribosomal subunit protein uS8c (141 aa).

This sequence belongs to the universal ribosomal protein uS8 family. Part of the 30S ribosomal subunit.

It localises to the plastid. It is found in the chloroplast. One of the primary rRNA binding proteins, it binds directly to 16S rRNA central domain where it helps coordinate assembly of the platform of the 30S subunit. The polypeptide is Small ribosomal subunit protein uS8c (rps8) (Pleurastrum terricola (Filamentous green alga)).